The sequence spans 503 residues: L-amino-acid oxidase (503 aa).

Residues 1–18 form the signal peptide; it reads MNVFFMFSLLFLAALGSC. Cys28 and Cys191 form a disulfide bridge. FAD contacts are provided by residues 61–62, 81–82, Arg89, and 105–108; these read MS, EA, and GPMR. Position 108 (Arg108) interacts with substrate. Asn190 carries N-linked (GlcNAc...) asparagine glycosylation. His241 provides a ligand contact to substrate. Val279 provides a ligand contact to FAD. A disulfide bond links Cys349 and Cys430. Substrate is bound at residue Tyr390. FAD contacts are provided by residues Glu475 and 482–487; that span reads GWIDST. 482 to 483 is a substrate binding site; the sequence is GW.

It belongs to the flavin monoamine oxidase family. FIG1 subfamily. As to quaternary structure, homodimer; non-covalently linked. FAD serves as cofactor. N-glycosylated. The enzymatic activity is not affected by deglycosylation. In terms of tissue distribution, expressed by the venom gland.

The protein resides in the secreted. The catalysed reaction is an L-alpha-amino acid + O2 + H2O = a 2-oxocarboxylate + H2O2 + NH4(+). It catalyses the reaction L-leucine + O2 + H2O = 4-methyl-2-oxopentanoate + H2O2 + NH4(+). It carries out the reaction L-phenylalanine + O2 + H2O = 3-phenylpyruvate + H2O2 + NH4(+). The enzyme catalyses L-methionine + O2 + H2O = 4-methylsulfanyl-2-oxobutanoate + H2O2 + NH4(+). The catalysed reaction is L-isoleucine + O2 + H2O = (S)-3-methyl-2-oxopentanoate + H2O2 + NH4(+). Its function is as follows. Catalyzes an oxidative deamination of predominantly hydrophobic and aromatic L-amino acids, thus producing hydrogen peroxide that may contribute to the diverse toxic effects of this enzyme. Is highly active on L-Met, L-Leu, L-Phe and L-Ile. Exhibits diverse biological activities, such as antibacterial on both Gram-positive and Gram-negative bacteria and antiparasitic activities, as well as induction of platelet aggregation. Effects of snake L-amino oxidases on platelets are controversial, since they either induce aggregation or inhibit agonist-induced aggregation. These different effects are probably due to different experimental conditions. This protein may also have activities in hemorrhage, hemolysis, edema, and apoptosis. This is L-amino-acid oxidase from Bothrops pauloensis (Neuwied's lancehead).